The chain runs to 286 residues: Shikimate dehydrogenase (NADP(+)) (286 aa).

Shikimate is bound by residues 20–22 (SLS) and Ser67. Lys71 (proton acceptor) is an active-site residue. Shikimate-binding residues include Asn92 and Asp107. NADP(+) is bound by residues 131-135 (GGGGA) and Ala230. Tyr232 is a shikimate binding site. Gly253 provides a ligand contact to NADP(+).

This sequence belongs to the shikimate dehydrogenase family. In terms of assembly, homodimer.

It catalyses the reaction shikimate + NADP(+) = 3-dehydroshikimate + NADPH + H(+). The protein operates within metabolic intermediate biosynthesis; chorismate biosynthesis; chorismate from D-erythrose 4-phosphate and phosphoenolpyruvate: step 4/7. In terms of biological role, involved in the biosynthesis of the chorismate, which leads to the biosynthesis of aromatic amino acids. Catalyzes the reversible NADPH linked reduction of 3-dehydroshikimate (DHSA) to yield shikimate (SA). The polypeptide is Shikimate dehydrogenase (NADP(+)) (Lactococcus lactis subsp. cremoris (strain MG1363)).